A 384-amino-acid polypeptide reads, in one-letter code: Dual-specificity RNA methyltransferase RlmN (384 aa).

Glu93 serves as the catalytic Proton acceptor. The Radical SAM core domain maps to 99–339 (EETRGTLCVS…TTIRKTRGDD (241 aa)). Cys106 and Cys344 are disulfide-bonded. Residues Cys113, Cys117, and Cys120 each coordinate [4Fe-4S] cluster. S-adenosyl-L-methionine contacts are provided by residues 170–171 (GE), Ser202, 224–226 (SLH), and Asn301. Cys344 serves as the catalytic S-methylcysteine intermediate.

This sequence belongs to the radical SAM superfamily. RlmN family. [4Fe-4S] cluster is required as a cofactor.

The protein localises to the cytoplasm. The enzyme catalyses adenosine(2503) in 23S rRNA + 2 reduced [2Fe-2S]-[ferredoxin] + 2 S-adenosyl-L-methionine = 2-methyladenosine(2503) in 23S rRNA + 5'-deoxyadenosine + L-methionine + 2 oxidized [2Fe-2S]-[ferredoxin] + S-adenosyl-L-homocysteine. It carries out the reaction adenosine(37) in tRNA + 2 reduced [2Fe-2S]-[ferredoxin] + 2 S-adenosyl-L-methionine = 2-methyladenosine(37) in tRNA + 5'-deoxyadenosine + L-methionine + 2 oxidized [2Fe-2S]-[ferredoxin] + S-adenosyl-L-homocysteine. Functionally, specifically methylates position 2 of adenine 2503 in 23S rRNA and position 2 of adenine 37 in tRNAs. m2A2503 modification seems to play a crucial role in the proofreading step occurring at the peptidyl transferase center and thus would serve to optimize ribosomal fidelity. The protein is Dual-specificity RNA methyltransferase RlmN of Cupriavidus necator (strain ATCC 17699 / DSM 428 / KCTC 22496 / NCIMB 10442 / H16 / Stanier 337) (Ralstonia eutropha).